The following is a 64-amino-acid chain: Conotoxin VnMLCL-05 (64 aa).

A signal peptide spans 1 to 19 (MLCLPVFIILLLLASPAAP). The propeptide occupies 20–43 (NPLQTRIQSNLIRAGPEDANIKTD). K63 is modified (lysine amide).

The protein belongs to the conotoxin T superfamily. Expressed by the venom duct.

The protein localises to the secreted. The polypeptide is Conotoxin VnMLCL-05 (Conus ventricosus (Mediterranean cone)).